The following is a 623-amino-acid chain: Pyranose 2-oxidase (623 aa).

A signal peptide spans 1–27 (MSTSSSDPFFNFTKSSFRSAAAQKASA). A propeptide spanning residues 28–38 (TSLPPLPGPDK) is cleaved from the precursor. Position 167 is a tele-8alpha-FAD histidine (His167). Residues Gln448 and His450 each contribute to the substrate site. His548 acts as the Proton acceptor in catalysis. Residue Asn593 is part of the active site.

Belongs to the GMC oxidoreductase family. In terms of assembly, homotetramer. FAD serves as cofactor. In terms of processing, not glycosylated.

The protein localises to the periplasm. The catalysed reaction is D-glucose + O2 = 2-dehydro-D-glucose + H2O2. Functionally, catalyzes the oxidation of various aldopyranoses and disaccharides on carbon-2 to the corresponding 2-keto sugars concomitant with the reduction of O(2) to H(2)O(2). Plays an important role in lignin degradation of wood rot fungi by supplying the essential cosubstrate H(2)O(2) for the ligninolytic peroxidases, lignin peroxidase and manganese-dependent peroxidase. The preferred substrate is D-glucose which is converted to 2-dehydro-D-glucose. Also acts on D-xylose, together with D-glucose the major sugars derived from wood, on L-sorbose, D-galactose and 1,5-anhydroglucitol, a diagnostic marker of diabetes mellitus. This Trametes versicolor (White-rot fungus) protein is Pyranose 2-oxidase (P2OX).